Consider the following 147-residue polypeptide: D-aminoacyl-tRNA deacylase (147 aa).

The Gly-cisPro motif, important for rejection of L-amino acids motif lies at 136 to 137 (GP).

The protein belongs to the DTD family. As to quaternary structure, homodimer.

The protein localises to the cytoplasm. The enzyme catalyses glycyl-tRNA(Ala) + H2O = tRNA(Ala) + glycine + H(+). The catalysed reaction is a D-aminoacyl-tRNA + H2O = a tRNA + a D-alpha-amino acid + H(+). An aminoacyl-tRNA editing enzyme that deacylates mischarged D-aminoacyl-tRNAs. Also deacylates mischarged glycyl-tRNA(Ala), protecting cells against glycine mischarging by AlaRS. Acts via tRNA-based rather than protein-based catalysis; rejects L-amino acids rather than detecting D-amino acids in the active site. By recycling D-aminoacyl-tRNA to D-amino acids and free tRNA molecules, this enzyme counteracts the toxicity associated with the formation of D-aminoacyl-tRNA entities in vivo and helps enforce protein L-homochirality. This is D-aminoacyl-tRNA deacylase from Nitratiruptor sp. (strain SB155-2).